The chain runs to 386 residues: Succinyl-diaminopimelate desuccinylase (386 aa).

His76 is a binding site for Zn(2+). Residue Asp78 is part of the active site. Asp110 contributes to the Zn(2+) binding site. Catalysis depends on Glu144, which acts as the Proton acceptor. Residues Glu145, Glu173, and His359 each coordinate Zn(2+).

It belongs to the peptidase M20A family. DapE subfamily. As to quaternary structure, homodimer. Requires Zn(2+) as cofactor. The cofactor is Co(2+).

The catalysed reaction is N-succinyl-(2S,6S)-2,6-diaminopimelate + H2O = (2S,6S)-2,6-diaminopimelate + succinate. Its pathway is amino-acid biosynthesis; L-lysine biosynthesis via DAP pathway; LL-2,6-diaminopimelate from (S)-tetrahydrodipicolinate (succinylase route): step 3/3. Functionally, catalyzes the hydrolysis of N-succinyl-L,L-diaminopimelic acid (SDAP), forming succinate and LL-2,6-diaminopimelate (DAP), an intermediate involved in the bacterial biosynthesis of lysine and meso-diaminopimelic acid, an essential component of bacterial cell walls. This chain is Succinyl-diaminopimelate desuccinylase, found in Chromohalobacter salexigens (strain ATCC BAA-138 / DSM 3043 / CIP 106854 / NCIMB 13768 / 1H11).